A 319-amino-acid polypeptide reads, in one-letter code: Lipoyl synthase (319 aa).

Residues 1 to 12 (MVTIVDTLSNTP) are compositionally biased toward polar residues. Residues 1 to 32 (MVTIVDTLSNTPLRPRHPEKANRPDSISPAKP) are disordered. 7 residues coordinate [4Fe-4S] cluster: cysteine 61, cysteine 66, cysteine 72, cysteine 87, cysteine 91, cysteine 94, and serine 300. One can recognise a Radical SAM core domain in the interval 73 to 289 (WDKKHATFMI…ETVAYTKGFL (217 aa)).

Belongs to the radical SAM superfamily. Lipoyl synthase family. The cofactor is [4Fe-4S] cluster.

The protein resides in the cytoplasm. It catalyses the reaction [[Fe-S] cluster scaffold protein carrying a second [4Fe-4S](2+) cluster] + N(6)-octanoyl-L-lysyl-[protein] + 2 oxidized [2Fe-2S]-[ferredoxin] + 2 S-adenosyl-L-methionine + 4 H(+) = [[Fe-S] cluster scaffold protein] + N(6)-[(R)-dihydrolipoyl]-L-lysyl-[protein] + 4 Fe(3+) + 2 hydrogen sulfide + 2 5'-deoxyadenosine + 2 L-methionine + 2 reduced [2Fe-2S]-[ferredoxin]. It functions in the pathway protein modification; protein lipoylation via endogenous pathway; protein N(6)-(lipoyl)lysine from octanoyl-[acyl-carrier-protein]: step 2/2. Its function is as follows. Catalyzes the radical-mediated insertion of two sulfur atoms into the C-6 and C-8 positions of the octanoyl moiety bound to the lipoyl domains of lipoate-dependent enzymes, thereby converting the octanoylated domains into lipoylated derivatives. In Bradyrhizobium sp. (strain BTAi1 / ATCC BAA-1182), this protein is Lipoyl synthase.